We begin with the raw amino-acid sequence, 484 residues long: Glycogen synthase (484 aa).

Lys20 lines the ADP-alpha-D-glucose pocket.

The protein belongs to the glycosyltransferase 1 family. Bacterial/plant glycogen synthase subfamily.

The enzyme catalyses [(1-&gt;4)-alpha-D-glucosyl](n) + ADP-alpha-D-glucose = [(1-&gt;4)-alpha-D-glucosyl](n+1) + ADP + H(+). It functions in the pathway glycan biosynthesis; glycogen biosynthesis. Functionally, synthesizes alpha-1,4-glucan chains using ADP-glucose. The protein is Glycogen synthase of Vibrio atlanticus (strain LGP32) (Vibrio splendidus (strain Mel32)).